Consider the following 634-residue polypeptide: CREB-regulated transcription coactivator 1 (634 aa).

A phosphoserine mark is found at Ser-64 and Ser-113. Disordered regions lie at residues 110–174 (RLGS…GSQD), 191–221 (TTSE…VPGI), 258–331 (LPTP…TLSP), and 357–479 (QAGS…HTST). Phosphothreonine is present on Thr-149. The residue at position 151 (Ser-151) is a Phosphoserine; by SIK1 and SIK2. The segment covering 151–174 (SDSALHQSTMTPTQPESFSSGSQD) has biased composition (polar residues). Residue Thr-161 is modified to Phosphothreonine. Basic and acidic residues predominate over residues 194-208 (EADKNLSKQAWDTKK). The Nuclear export signal signature appears at 242 to 258 (TGGSLPDLTNIHFPSPL). Composition is skewed to polar residues over residues 271 to 283 (ALSS…NLAA), 296 to 305 (GMSTPGSSPQ), and 314 to 331 (LSLS…TLSP). The span at 362 to 397 (QPPPQPQPPPPPPPASQQPPPPPPPQAPVRLPPGGP) shows a compositional bias: pro residues. Residues 446–479 (QYRTSAGSPANQSPTSPVSNQGFSPGSSPQHTST) are compositionally biased toward polar residues.

Belongs to the TORC family. In terms of assembly, binds, as a tetramer, through its N-terminal region, with the bZIP domain of CREB1. 'Arg-314' in the bZIP domain of CREB1 is essential for this interaction. Interaction, via its C-terminal, with TAF4, enhances recruitment of TAF4 to CREB1. Interacts with 14-3-3 proteins, including YWHAE/14-3-3 epsilon. Interacts with calmodulin-dependent catalytic subunit PPP3CA/calcineurin A. As to quaternary structure, (Microbial infection) Interacts with HTLV1 Tax. Phosphorylation/dephosphorylation states of Ser-151 are required for regulating transduction of CREB activity. TORCs are inactive when phosphorylated, and active when dephosphorylated at this site. This primary site of phosphorylation is mediated by SIKs (SIK1 and SIK2), is regulated by cAMP and calcium levels and is dependent on the phosphorylation of SIKs by LKB1. As to expression, highly expressed in adult and fetal brain. Located to specific regions such as the prefrontal cortex and cerebellum. Very low expression in other tissues such as heart, spleen, lung, skeletal muscle, salivary gland, ovary and kidney.

It is found in the cytoplasm. Its subcellular location is the nucleus. In terms of biological role, transcriptional coactivator for CREB1 which activates transcription through both consensus and variant cAMP response element (CRE) sites. Acts as a coactivator, in the SIK/TORC signaling pathway, being active when dephosphorylated and acts independently of CREB1 'Ser-133' phosphorylation. Enhances the interaction of CREB1 with TAF4. Regulates the expression of specific CREB-activated genes such as the steroidogenic gene, StAR. Potent coactivator of PGC1alpha and inducer of mitochondrial biogenesis in muscle cells. In the hippocampus, involved in late-phase long-term potentiation (L-LTP) maintenance at the Schaffer collateral-CA1 synapses. May be required for dendritic growth of developing cortical neurons. In concert with SIK1, regulates the light-induced entrainment of the circadian clock. In response to light stimulus, coactivates the CREB-mediated transcription of PER1 which plays an important role in the photic entrainment of the circadian clock. (Microbial infection) Plays a role of coactivator for TAX activation of the human T-cell leukemia virus type 1 (HTLV-1) long terminal repeats (LTR). The protein is CREB-regulated transcription coactivator 1 of Homo sapiens (Human).